Consider the following 2523-residue polypeptide: Non-reducing polyketide synthase Preu3 (2523 aa).

Residues 58 to 247 are N-terminal acylcarrier protein transacylase domain (SAT); sequence LQSLASERRA…KILAMTGSFH (190 aa). Residues 373–792 enclose the Ketosynthase family 3 (KS3) domain; the sequence is DNAVAVVGMA…GSNGAMIVCQ (420 aa). Residues Cys-539, His-674, and His-715 each act as for beta-ketoacyl synthase activity in the active site. The segment at 900–1207 is malonyl-CoA:ACP transacylase (MAT) domain; that stretch reads CFGGQVKAFV…KAFGSLADAT (308 aa). Ser-986 acts as the For acyl/malonyl transferase activity in catalysis. The N-terminal hotdog fold stretch occupies residues 1271–1398; the sequence is HELLTFSSFE…GLVAFGGTVE (128 aa). Residues 1271-1573 form the PKS/mFAS DH domain; the sequence is HELLTFSSFE…FTRVTVPGLR (303 aa). The segment at 1301–1568 is product template (PT) domain; it reads LVKGHAVVAQ…ALGCRFTRVT (268 aa). Residue His-1305 is the Proton acceptor; for dehydratase activity of the active site. Residues 1421-1573 are C-terminal hotdog fold; sequence ECDALRGSAT…FTRVTVPGLR (153 aa). Asp-1483 (proton donor; for dehydratase activity) is an active-site residue. Positions 1579-1601 are disordered; the sequence is ANGDARAQERPSGSRISPSPLAP. The Carrier domain maps to 1639 to 1713; that stretch reads VDYLAQVKAL…KLAEYLAKTL (75 aa). Ser-1673 is subject to O-(pantetheine 4'-phosphoryl)serine. The interval 1735-1757 is disordered; that stretch reads DAEQSSDESPYDSTDDSASGYGD. A compositionally biased stretch (acidic residues) spans 1738–1749; the sequence is QSSDESPYDSTD. The tract at residues 1986-2085 is methyltransferase (CMeT) domain; it reads LEIGGGTGGT…MRQLLSSEGF (100 aa). Positions 2218 to 2520 are thioesterase (TE) domain; the sequence is LILHGGGHVL…RALEWLVEQC (303 aa).

It depends on pantetheine 4'-phosphate as a cofactor.

The catalysed reaction is 3 malonyl-CoA + acetyl-CoA + S-adenosyl-L-methionine + H(+) = 3-methylorsellinate + S-adenosyl-L-homocysteine + 3 CO2 + 4 CoA. Its function is as follows. Non-reducing polyketide synthase; part of a gene cluster that mediates the biosynthesis of a yet unidentified natural product. The first step in the pathway is performed by Preu3 that condenses one acetyl-CoA starter unit with 3 malonyl-CoA units. Preu3 also catalyzes one methylation step to produce 3-methylorsellinate, an intermediate that exhibits significant antibacterial activities against methicillin-resistant Staphylococcus aureus, multidrug-resistant Enterococcus faecalis, multidrug-resistant Enterococcus faecium, and multidrug-resistant Staphylococcus epidermidis. The protein is Non-reducing polyketide synthase Preu3 of Preussia isomera (Coprophilous fungus).